The primary structure comprises 219 residues: Ribose-5-phosphate isomerase A (219 aa).

Substrate contacts are provided by residues serine 28–threonine 31, aspartate 81–aspartate 84, and lysine 94–glycine 97. Glutamate 103 acts as the Proton acceptor in catalysis. Lysine 121 contacts substrate.

Belongs to the ribose 5-phosphate isomerase family. In terms of assembly, homodimer.

It carries out the reaction aldehydo-D-ribose 5-phosphate = D-ribulose 5-phosphate. It participates in carbohydrate degradation; pentose phosphate pathway; D-ribose 5-phosphate from D-ribulose 5-phosphate (non-oxidative stage): step 1/1. In terms of biological role, catalyzes the reversible conversion of ribose-5-phosphate to ribulose 5-phosphate. This is Ribose-5-phosphate isomerase A from Histophilus somni (strain 2336) (Haemophilus somnus).